Consider the following 485-residue polypeptide: Adenylate kinase 8 (485 aa).

2 adenylate kinase regions span residues 58–258 (PRVF…TFVL) and 269–472 (PRIL…YTVS). 67–72 (ASGKHT) contributes to the ATP binding site. An NMP 1 region spans residues 87–113 (TPESVLSSDVSLLAKEAQSYRDKGQEV). Residues 140–143 (GFPK) and Q147 contribute to the AMP site. The segment at 177–206 (GKRIDTANGEVYHTTFDWPSDPTVQRNLVE) is LID 1. R218 is an AMP binding site. 278–283 (GSGRSL) contributes to the ATP binding site. Residues 298–327 (CCGQVLKEAVADQTKLGEVIQPYIENDQQV) form an NMP 2 region. AMP is bound by residues 325–327 (QQV), 354–357 (GFPR), and Q361. An LID 2 region spans residues 391–424 (LCMTDPVSGERYHDIYKPAPSSEVHERLQQNPRH). An AMP-binding site is contributed by R432.

The protein belongs to the adenylate kinase family.

It localises to the cytoplasm. The protein localises to the cytosol. It carries out the reaction AMP + ATP = 2 ADP. It catalyses the reaction a 2'-deoxyribonucleoside 5'-diphosphate + ATP = a 2'-deoxyribonucleoside 5'-triphosphate + ADP. The enzyme catalyses a ribonucleoside 5'-diphosphate + ATP = a ribonucleoside 5'-triphosphate + ADP. In terms of biological role, nucleoside monophosphate (NMP) kinase that catalyzes the reversible transfer of the terminal phosphate group between nucleoside triphosphates and monophosphates. Has highest activity toward AMP, and weaker activity toward dAMP, CMP and dCMP. Also displays broad nucleoside diphosphate kinase activity. This is Adenylate kinase 8 (ak8) from Xenopus tropicalis (Western clawed frog).